A 275-amino-acid chain; its full sequence is 2,3,4,5-tetrahydropyridine-2,6-dicarboxylate N-succinyltransferase (275 aa).

Substrate is bound by residues R104 and D141.

The protein belongs to the transferase hexapeptide repeat family. As to quaternary structure, homotrimer.

It localises to the cytoplasm. It carries out the reaction (S)-2,3,4,5-tetrahydrodipicolinate + succinyl-CoA + H2O = (S)-2-succinylamino-6-oxoheptanedioate + CoA. Its pathway is amino-acid biosynthesis; L-lysine biosynthesis via DAP pathway; LL-2,6-diaminopimelate from (S)-tetrahydrodipicolinate (succinylase route): step 1/3. The protein is 2,3,4,5-tetrahydropyridine-2,6-dicarboxylate N-succinyltransferase of Haemophilus influenzae (strain 86-028NP).